Consider the following 66-residue polypeptide: Large ribosomal subunit protein bL33c (66 aa).

The protein belongs to the bacterial ribosomal protein bL33 family.

It is found in the plastid. The protein resides in the chloroplast. This is Large ribosomal subunit protein bL33c from Lotus japonicus (Lotus corniculatus var. japonicus).